We begin with the raw amino-acid sequence, 346 residues long: Phosphate acyltransferase (346 aa).

The protein belongs to the PlsX family. In terms of assembly, homodimer. Probably interacts with PlsY.

It localises to the cytoplasm. It catalyses the reaction a fatty acyl-[ACP] + phosphate = an acyl phosphate + holo-[ACP]. It participates in lipid metabolism; phospholipid metabolism. Functionally, catalyzes the reversible formation of acyl-phosphate (acyl-PO(4)) from acyl-[acyl-carrier-protein] (acyl-ACP). This enzyme utilizes acyl-ACP as fatty acyl donor, but not acyl-CoA. The protein is Phosphate acyltransferase of Geotalea daltonii (strain DSM 22248 / JCM 15807 / FRC-32) (Geobacter daltonii).